We begin with the raw amino-acid sequence, 243 residues long: UPF0758 protein Cyan7425_1778 (243 aa).

The MPN domain maps to Thr-112–Leu-235. Zn(2+) is bound by residues His-184, His-186, and Asp-197. Residues His-184–Asp-197 carry the JAMM motif motif.

Belongs to the UPF0758 family.

The sequence is that of UPF0758 protein Cyan7425_1778 from Cyanothece sp. (strain PCC 7425 / ATCC 29141).